A 332-amino-acid chain; its full sequence is T-cell surface glycoprotein CD1c2 (332 aa).

A signal peptide spans 1-17 (MLFLQFLFVDVVLGGSI). The Extracellular portion of the chain corresponds to 18-300 (TENVVQENIS…IILYWGHGLS (283 aa)). 3 N-linked (GlcNAc...) asparagine glycosylation sites follow: N25, N38, and N75. Cystine bridges form between C120–C184 and C224–C279. The region spanning 205 to 292 (PEVWLSSSPN…HSSLRDQDII (88 aa)) is the Ig-like domain. A helical transmembrane segment spans residues 301–321 (VILIALAVIVPLVLLIVLVLL). Residues 322 to 332 (CKKRCTYQGIP) are Cytoplasmic-facing.

Heterodimer with B2M (beta-2-microglobulin).

It localises to the cell membrane. The protein localises to the endosome membrane. Functionally, antigen-presenting protein that binds self and non-self lipid and glycolipid antigens and presents them to T-cell receptors on natural killer T-cells. This is T-cell surface glycoprotein CD1c2 (CD1C2) from Cavia porcellus (Guinea pig).